The primary structure comprises 457 residues: Nuclear hormone receptor family member nhr-20 (457 aa).

The segment at residues 16-92 is a DNA-binding region (nuclear receptor); the sequence is TSKCLVCEHP…AGMRRECVQK (77 aa). 2 NR C4-type zinc fingers span residues 19–40 and 56–80; these read CLVC…CLAC and CKKD…FDKC. The interval 125 to 182 is disordered; that stretch reads GDQTDDNSPLSIEKKSPPGLLPNDSPMMADFKFDPSDIPSTSGGSTQRLERSPSPKLA. Residues 162–171 are compositionally biased toward polar residues; that stretch reads IPSTSGGSTQ. One can recognise an NR LBD domain in the interval 201 to 457; the sequence is QLKNSMDRRR…DALSKSLLTL (257 aa).

It belongs to the nuclear hormone receptor family.

It localises to the nucleus. Orphan nuclear receptor. The chain is Nuclear hormone receptor family member nhr-20 (nhr-20) from Caenorhabditis elegans.